The chain runs to 436 residues: Enolase (436 aa).

Gln167 is a binding site for (2R)-2-phosphoglycerate. The Proton donor role is filled by Glu209. Residues Asp246, Glu291, and Asp318 each contribute to the Mg(2+) site. The (2R)-2-phosphoglycerate site is built by Lys343, Arg372, Ser373, and Lys394. Lys343 (proton acceptor) is an active-site residue.

It belongs to the enolase family. Component of the RNA degradosome, a multiprotein complex involved in RNA processing and mRNA degradation. It depends on Mg(2+) as a cofactor.

Its subcellular location is the cytoplasm. The protein resides in the secreted. It localises to the cell surface. It catalyses the reaction (2R)-2-phosphoglycerate = phosphoenolpyruvate + H2O. It functions in the pathway carbohydrate degradation; glycolysis; pyruvate from D-glyceraldehyde 3-phosphate: step 4/5. In terms of biological role, catalyzes the reversible conversion of 2-phosphoglycerate (2-PG) into phosphoenolpyruvate (PEP). It is essential for the degradation of carbohydrates via glycolysis. The sequence is that of Enolase from Haemophilus influenzae (strain ATCC 51907 / DSM 11121 / KW20 / Rd).